We begin with the raw amino-acid sequence, 428 residues long: MLRTLLRRRLFSYPTKYYFMVLVLSLITFSVLRIHQKPEFVSVRHLELAGENPSSDINCTKVLQGDVNEIQKVKLEILTVKFKKRPRWTPDDYINMTSDCSSFIKRRKYIVEPLSKEEAEFPIAYSIVVHHKIEMLDRLLRAIYMPQNFYCIHVDTKSEDSYLAAVMGIASCFSNVFVASRLESVVYASWSRVQADLNCMKDLYAMSANWKYLINLCGMDFPIKTNLEIVRKLKLLMGENNLETERMPSHKEERWKKRYEVVNGKLTNTGTVKMLPPLETPLFSGSAYFVVSREYVGYVLQNEKIQKLMEWAQDTYSPDEYLWATIQRIPEVPGSLPASHKYDLSDMQAVARFVKWQYFEGDVSKGAPYPPCDGVHVRSVCIFGAGDLNWMLRKHHLFANKFDVDVDLFAIQCLDEHLRHKALETLKH.

The Cytoplasmic segment spans residues 1–9 (MLRTLLRRR). The tract at residues 5–9 (LLRRR) is mediates interaction with GOLPH3 and is necessary and sufficient for localization to the Golgi. The helical; Signal-anchor for type II membrane protein transmembrane segment at 10–32 (LFSYPTKYYFMVLVLSLITFSVL) threads the bilayer. The interval 33–121 (RIHQKPEFVS…EPLSKEEAEF (89 aa)) is stem region. At 33 to 428 (RIHQKPEFVS…RHKALETLKH (396 aa)) the chain is on the lumenal side. N-linked (GlcNAc...) asparagine glycans are attached at residues Asn58 and Asn95. Intrachain disulfides connect Cys59-Cys413, Cys100-Cys172, Cys151-Cys199, and Cys372-Cys381. Residues 122-428 (PIAYSIVVHH…RHKALETLKH (307 aa)) are catalytic. UDP-N-acetyl-alpha-D-glucosamine-binding positions include 128–130 (VVH), 155–157 (DTK), and Tyr187. A glycoprotein contacts are provided by Glu243, Lys251, Arg254, Glu320, Lys341, and Tyr358. Glu320 (nucleophile) is an active-site residue. Residues Arg378 and Lys401 each contribute to the UDP-N-acetyl-alpha-D-glucosamine site.

Belongs to the glycosyltransferase 14 family. As to quaternary structure, interacts with GOLPH3; may control GCNT1 retention in the Golgi. Highly expressed in activated T-lymphocytes and myeloid cells.

The protein resides in the golgi apparatus membrane. The enzyme catalyses a 3-O-[beta-D-galactosyl-(1-&gt;3)-N-acetyl-alpha-D-galactosaminyl]-L-seryl-[protein] + UDP-N-acetyl-alpha-D-glucosamine = 3-O-{beta-D-galactosyl-(1-&gt;3)-[N-acetyl-beta-D-glucosaminyl-(1-&gt;6)]-N-acetyl-alpha-D-galactosaminyl}-L-seryl-[protein] + UDP + H(+). It carries out the reaction a 3-O-[beta-D-galactosyl-(1-&gt;3)-N-acetyl-alpha-D-galactosaminyl]-L-threonyl-[protein] + UDP-N-acetyl-alpha-D-glucosamine = a 3-O-{beta-D-galactosyl-(1-&gt;3)-[N-acetyl-beta-D-glucosaminyl-(1-&gt;6)]-N-acetyl-alpha-D-galactosaminyl}-L-threonyl-[protein] + UDP + H(+). It catalyses the reaction a globoside GalGb4Cer + UDP-N-acetyl-alpha-D-glucosamine = a globoside GlcNAc-(beta1-&gt;6)-GalGb4Cer + UDP + H(+). The catalysed reaction is a ganglioside GA1 + UDP-N-acetyl-alpha-D-glucosamine = a ganglioside beta-D-GlcNAc-(1-&gt;6)-GA1 + UDP + H(+). The protein operates within protein modification; protein glycosylation. Its pathway is glycolipid biosynthesis. Functionally, glycosyltransferase that catalyzes the transfer of an N-acetylglucosamine (GlcNAc) moiety in beta1-6 linkage from UDP-GlcNAc onto mucin-type core 1 O-glycan to form the branched mucin-type core 2 O-glycan. The catalysis is metal ion-independent and occurs with inversion of the anomeric configuration of sugar donor. Selectively involved in synthesis of mucin-type core 2 O-glycans that serve as scaffolds for the display of selectin ligand sialyl Lewis X epitope by myeloid cells, with an impact on homeostasis and recruitment to inflammatory sites. Can also act on glycolipid substrates. Transfers GlcNAc moiety to GalGb4Cer globosides in a reaction step to the synthesis of stage-specific embryonic antigen 1 (SSEA-1) determinant. Can use Galbeta1-3GalNAcalpha1- and Galbeta1-3GalNAcbeta1- oligosaccharide derivatives as acceptor substrates. The polypeptide is Beta-1,3-galactosyl-O-glycosyl-glycoprotein beta-1,6-N-acetylglucosaminyltransferase (GCNT1) (Homo sapiens (Human)).